Here is a 195-residue protein sequence, read N- to C-terminus: Transmembrane protein 126A (195 aa).

Over 1–33 (MENHKSNNKENITIVDISRKINQLPEAERNLLE) the chain is Mitochondrial matrix. Residues 34–54 (NGSVYVGLNAALCGLIANSLF) traverse the membrane as a helical segment. At 55–56 (RR) the chain is on the mitochondrial intermembrane side. A helical membrane pass occupies residues 57 to 77 (ILNVTKARIAAGLPMAGIPFL). The Mitochondrial matrix segment spans residues 78 to 110 (TTDLTYRCFVSFPLNTGDLDCETCTITRSGLTG). Residues 111-131 (LVIGGLYPVFLAIPVNGGLAA) traverse the membrane as a helical segment. Over 132 to 158 (RYQSALLPHKGNILSYWIRTSKPVFRK) the chain is Mitochondrial intermembrane. A helical membrane pass occupies residues 159–175 (MLFPILLQTMFSAYLGS). Over 176–195 (EQYKLLIKALQLSEPGKEIH) the chain is Mitochondrial matrix.

Belongs to the TMEM126 family. As to quaternary structure, interacts with OXA1L; promoting cotranslational quality control in mitochondria. In terms of tissue distribution, strongly expressed in brain, cerebellum, skeletal muscle, testis. High expression also found in fetal brain, fetal retinal pigmentary epithelium, and fetal retina. Highly expressed in retinal ganglion cells.

Its subcellular location is the mitochondrion inner membrane. In terms of biological role, protein required for the cotranslational protein quality control in the inner membrane of the mitochondria. Associates with newly synthesized polypeptides and may act as a chaperone that cooperates with OXA1L for the insertion of newly synthesized mitochondrial proteins into the inner membrane. Required for the assembly of the ND4 module of mitochondrial complex I. The sequence is that of Transmembrane protein 126A from Homo sapiens (Human).